We begin with the raw amino-acid sequence, 492 residues long: Ketol-acid reductoisomerase (NADP(+)) (492 aa).

One can recognise a KARI N-terminal Rossmann domain in the interval 15-208 (AQLGKCRFMA…GGDRAGVLES (194 aa)). NADP(+) contacts are provided by residues 45–48 (CGAQ), Arg68, Arg76, Ser78, and 108–110 (DKQ). His132 is a catalytic residue. An NADP(+)-binding site is contributed by Gly158. 2 consecutive KARI C-terminal knotted domains span residues 209-344 (SFVA…KAPP) and 345-485 (FEGK…MTDM). Mg(2+) is bound by residues Asp217, Glu221, Glu389, and Glu393. A substrate-binding site is contributed by Ser414.

It belongs to the ketol-acid reductoisomerase family. Mg(2+) is required as a cofactor.

It catalyses the reaction (2R)-2,3-dihydroxy-3-methylbutanoate + NADP(+) = (2S)-2-acetolactate + NADPH + H(+). It carries out the reaction (2R,3R)-2,3-dihydroxy-3-methylpentanoate + NADP(+) = (S)-2-ethyl-2-hydroxy-3-oxobutanoate + NADPH + H(+). It functions in the pathway amino-acid biosynthesis; L-isoleucine biosynthesis; L-isoleucine from 2-oxobutanoate: step 2/4. It participates in amino-acid biosynthesis; L-valine biosynthesis; L-valine from pyruvate: step 2/4. Functionally, involved in the biosynthesis of branched-chain amino acids (BCAA). Catalyzes an alkyl-migration followed by a ketol-acid reduction of (S)-2-acetolactate (S2AL) to yield (R)-2,3-dihydroxy-isovalerate. In the isomerase reaction, S2AL is rearranged via a Mg-dependent methyl migration to produce 3-hydroxy-3-methyl-2-ketobutyrate (HMKB). In the reductase reaction, this 2-ketoacid undergoes a metal-dependent reduction by NADPH to yield (R)-2,3-dihydroxy-isovalerate. This chain is Ketol-acid reductoisomerase (NADP(+)), found in Edwardsiella ictaluri (strain 93-146).